Consider the following 406-residue polypeptide: 5-hydroxytryptamine receptor 4 (406 aa).

The Extracellular portion of the chain corresponds to 1–19 (MDRLDANVSSNEGFGSVEK). An N-linked (GlcNAc...) asparagine glycan is attached at asparagine 7. A helical membrane pass occupies residues 20 to 44 (VVLLTFFAMVILMAILGNLLVMVAV). Topologically, residues 45–54 (CRDRQLRKIK) are cytoplasmic. A helical transmembrane segment spans residues 55–78 (TNYFIVSLAFADLLVSVLVNAFGA). Over 79–92 (IELVQDIWFYGEMF) the chain is Extracellular. A helical membrane pass occupies residues 93-117 (CLVRTSLDVLLTTASIFHLCCISLD). An intrachain disulfide couples cysteine 93 to cysteine 184. A serotonin-binding site is contributed by aspartate 100. Residues 118–133 (RYYAICCQPLVYRNKM) are Cytoplasmic-facing. Residues 134–157 (TPLRIALMLGGCWVIPMFISFLPI) traverse the membrane as a helical segment. Over 158 to 188 (MQGWNNIGIVDVIEKRKFNHNSNSTFCVFMV) the chain is Extracellular. The chain crosses the membrane as a helical span at residues 189–212 (NKPYAITCSVVAFYIPFLLMVLAY). At 213–257 (YRIYVTAKEHAQQIQMLQRAGATSESRPQTADQHSTHRMRTETKA) the chain is on the cytoplasmic side. The chain crosses the membrane as a helical span at residues 258 to 283 (AKTLCVIMGCFCFCWAPFFVTNIVDP). Asparagine 279 is a binding site for serotonin. At 284–290 (FIDYTVP) the chain is on the extracellular side. The helical transmembrane segment at 291 to 314 (EKVWTAFLWLGYINSGLNPFLYAF) threads the bilayer. The Cytoplasmic portion of the chain corresponds to 315–406 (LNKSFRRAFL…DSCSLKRSQS (92 aa)).

The protein belongs to the G-protein coupled receptor 1 family. As to quaternary structure, interacts (via C-terminus 330-346 AA) with GRK5; this interaction is promoted by 5-HT (serotonin). In terms of tissue distribution, in brain, isoform 5-HT4S is restricted to the striatum. In peripheral tissues, differential expression is also observed in the atrium of the heart where only isoform 5-HT4S is detectable. As to expression, in brain, isoform 5-HT4L is expressed throughout the brain, except in the cerebellum.

The protein localises to the cell membrane. It is found in the endosome membrane. Functionally, G-protein coupled receptor for 5-hydroxytryptamine (serotonin), a biogenic hormone that functions as a neurotransmitter, a hormone and a mitogen. Ligand binding causes a conformation change that triggers signaling via guanine nucleotide-binding proteins (G proteins) and modulates the activity of downstream effectors. HTR4 is coupled to G(s) G alpha proteins and mediates activation of adenylate cyclase activity. In Rattus norvegicus (Rat), this protein is 5-hydroxytryptamine receptor 4 (Htr4).